Here is a 561-residue protein sequence, read N- to C-terminus: Carboxylesterase 1E (561 aa).

Positions 1–18 (MCLYALILVFLAAFTAGG) are cleaved as a signal peptide. N-linked (GlcNAc...) asparagine glycans are attached at residues Asn79 and Asn107. A disulfide bridge connects residues Cys87 and Cys116. Residue Ser221 is the Acyl-ester intermediate of the active site. A disulfide bridge connects residues Cys273 and Cys284. Residues Glu353 and His466 each act as charge relay system in the active site. N-linked (GlcNAc...) asparagine glycosylation is present at Asn489. A Prevents secretion from ER motif is present at residues 558-561 (HTEL).

Belongs to the type-B carboxylesterase/lipase family. As to expression, expressed in liver.

The protein resides in the endoplasmic reticulum lumen. The protein localises to the microsome membrane. The catalysed reaction is a carboxylic ester + H2O = an alcohol + a carboxylate + H(+). The enzyme catalyses all-trans-retinyl hexadecanoate + H2O = all-trans-retinol + hexadecanoate + H(+). Functionally, involved in the detoxification of xenobiotics and in the activation of ester and amide prodrugs. Hydrolyzes retinyl esters. The chain is Carboxylesterase 1E (Ces1e) from Rattus norvegicus (Rat).